Consider the following 402-residue polypeptide: Beta-peptidyl aminopeptidase BapA (402 aa).

An N-terminal signal peptide occupies residues 1–29 (MTSTQRLWSGALPLLTALIVSIAATASLA). The active-site Nucleophile is the Ser-279. Catalysis depends on proton donor/acceptor residues Ser-317 and Glu-319.

It belongs to the peptidase S58 family. Heterooctamer of 4 heterodimers ((alpha:beta)4); each heterodimer is composed of an alpha subunit and a beta subunit processed from the same precursor. Post-translationally, autoproteolytic processing to generate the alpha and beta subunit is required for self-activation and is proposed to use a similar mechanism as substrate cleavage.

The protein resides in the periplasm. The enzyme catalyses Cleaves N-terminal beta-homoamino acids from peptides composed of 2 to 6 amino acids.. With respect to regulation, inhibited by AEBSF (4-(2-aminoethyl)benzenesulfonyl fluoride, Pefabloc SC), ampicillin and AMP(hyd) (ampillicin-derived penicilloic acid). Beta-aminopeptidase that can cleave synthetic beta-peptides which consist of backbone-elongated beta-amino acid residues that are not processed by common proteolytic enzymes. Can cleave the beta-peptides beta-homoVal-beta-homoAla-beta-homoLeu and beta-homoAla-beta-homoLeu. Requires a beta-amino acid at the N-terminus of peptide substrates and cleaves the peptide bond between the N-terminal beta-amino acid and the amino acid at the second position of tripeptidic substrates of the general structure H-betahXaa-Ile-betahTyr-OH according to the following preferences with regard to the side chain of the N-terminal beta-amino acid: aliphatic and aromatic &gt; OH-containing &gt; hydrogen, basic and polar. This is Beta-peptidyl aminopeptidase BapA from Sphingosinicella xenopeptidilytica.